The following is a 213-amino-acid chain: ATP phosphoribosyltransferase (213 aa).

This sequence belongs to the ATP phosphoribosyltransferase family. Short subfamily. Heteromultimer composed of HisG and HisZ subunits.

The protein resides in the cytoplasm. The catalysed reaction is 1-(5-phospho-beta-D-ribosyl)-ATP + diphosphate = 5-phospho-alpha-D-ribose 1-diphosphate + ATP. Its pathway is amino-acid biosynthesis; L-histidine biosynthesis; L-histidine from 5-phospho-alpha-D-ribose 1-diphosphate: step 1/9. Its function is as follows. Catalyzes the condensation of ATP and 5-phosphoribose 1-diphosphate to form N'-(5'-phosphoribosyl)-ATP (PR-ATP). Has a crucial role in the pathway because the rate of histidine biosynthesis seems to be controlled primarily by regulation of HisG enzymatic activity. The polypeptide is ATP phosphoribosyltransferase (Nitrosococcus oceani (strain ATCC 19707 / BCRC 17464 / JCM 30415 / NCIMB 11848 / C-107)).